Here is a 116-residue protein sequence, read N- to C-terminus: Large ribosomal subunit protein uL18 (116 aa).

The protein belongs to the universal ribosomal protein uL18 family. In terms of assembly, part of the 50S ribosomal subunit; part of the 5S rRNA/L5/L18/L25 subcomplex. Contacts the 5S and 23S rRNAs.

In terms of biological role, this is one of the proteins that bind and probably mediate the attachment of the 5S RNA into the large ribosomal subunit, where it forms part of the central protuberance. In Shewanella baltica (strain OS223), this protein is Large ribosomal subunit protein uL18.